The chain runs to 434 residues: Nicotinate phosphoribosyltransferase (434 aa).

Phosphohistidine; by autocatalysis is present on His-242.

It belongs to the NAPRTase family. Post-translationally, transiently phosphorylated on a His residue during the reaction cycle. Phosphorylation strongly increases the affinity for substrates and increases the rate of nicotinate D-ribonucleotide production. Dephosphorylation regenerates the low-affinity form of the enzyme, leading to product release.

The catalysed reaction is nicotinate + 5-phospho-alpha-D-ribose 1-diphosphate + ATP + H2O = nicotinate beta-D-ribonucleotide + ADP + phosphate + diphosphate. It functions in the pathway cofactor biosynthesis; NAD(+) biosynthesis; nicotinate D-ribonucleotide from nicotinate: step 1/1. Its function is as follows. Catalyzes the synthesis of beta-nicotinate D-ribonucleotide from nicotinate and 5-phospho-D-ribose 1-phosphate at the expense of ATP. The chain is Nicotinate phosphoribosyltransferase from Rhizobium etli (strain ATCC 51251 / DSM 11541 / JCM 21823 / NBRC 15573 / CFN 42).